Here is a 371-residue protein sequence, read N- to C-terminus: Geranylgeranyl pyrophosphate synthase paxG (371 aa).

Residues Lys89, Arg92, and His121 each coordinate isopentenyl diphosphate. 2 residues coordinate Mg(2+): Asp128 and Asp132. Dimethylallyl diphosphate is bound at residue Arg137. Residue Arg138 participates in isopentenyl diphosphate binding. Residues Lys215, Thr216, and Gln249 each contribute to the dimethylallyl diphosphate site. Asp252 contacts Mg(2+). Dimethylallyl diphosphate-binding residues include Asn256, Lys266, and Lys276. The Peroxisomal targeting signal motif lies at 369 to 371 (GRV).

It belongs to the FPP/GGPP synthase family. Requires Mg(2+) as cofactor.

The protein localises to the peroxisome. The enzyme catalyses isopentenyl diphosphate + dimethylallyl diphosphate = (2E)-geranyl diphosphate + diphosphate. It catalyses the reaction isopentenyl diphosphate + (2E)-geranyl diphosphate = (2E,6E)-farnesyl diphosphate + diphosphate. It carries out the reaction isopentenyl diphosphate + (2E,6E)-farnesyl diphosphate = (2E,6E,10E)-geranylgeranyl diphosphate + diphosphate. Its pathway is secondary metabolite biosynthesis. Its function is as follows. Geranylgeranyl pyrophosphate synthase; part of the gene cluster that mediates the biosynthesis of paxilline, a mycotoxin that acts as an inhibitor of mammalian maxi-K channels. PaxG, the geranylgeranyl diphosphate (GGPP) synthase is proposed to catalyze the first step in paxilline biosynthesis. Condensation of indole-3-glycerol phosphate with GGPP by paxC then forms 3-geranylgeranylindole (3-GGI), followed by epoxidation and cyclization of this intermediate (by paxM and paxB) to form paspaline. Paspaline is subsequently converted to 13-desoxypaxilline by paxP, the latter being then converted to paxilline by paxQ. Finally paxilline can be mono- and di-prenylated by paxD. The protein is Geranylgeranyl pyrophosphate synthase paxG of Penicillium paxilli.